A 426-amino-acid polypeptide reads, in one-letter code: Dihydroorotase (426 aa).

Residues His-62 and His-64 each coordinate Zn(2+). Substrate is bound by residues 64-66 and Asn-96; that span reads HLR. Residues Asp-154, His-181, His-234, and Asp-307 each contribute to the Zn(2+) site. Residue Asp-307 is part of the active site. His-311 provides a ligand contact to substrate.

This sequence belongs to the metallo-dependent hydrolases superfamily. DHOase family. Class I DHOase subfamily. The cofactor is Zn(2+).

It catalyses the reaction (S)-dihydroorotate + H2O = N-carbamoyl-L-aspartate + H(+). The protein operates within pyrimidine metabolism; UMP biosynthesis via de novo pathway; (S)-dihydroorotate from bicarbonate: step 3/3. Catalyzes the reversible cyclization of carbamoyl aspartate to dihydroorotate. This chain is Dihydroorotase, found in Syntrophus aciditrophicus (strain SB).